Consider the following 408-residue polypeptide: Beta-ureidopropionase (408 aa).

The region spanning 90-360 (VRVGLIQNSI…DGLLISDMDL (271 aa)) is the CN hydrolase domain. Glu-137 acts as the Proton acceptor in catalysis. Lys-212 serves as the catalytic Proton donor. The Nucleophile role is filled by Cys-249.

The protein belongs to the carbon-nitrogen hydrolase superfamily. BUP family. As to quaternary structure, homodimer, homotetramer, homooctamer; can also form higher homooligomers.

It localises to the cytoplasm. The catalysed reaction is 3-(carbamoylamino)propanoate + H2O + 2 H(+) = beta-alanine + NH4(+) + CO2. It carries out the reaction 3-(carbamoylamino)-2-methylpropanoate + H2O + 2 H(+) = (R)-3-amino-2-methylpropanoate + NH4(+) + CO2. It functions in the pathway amino-acid biosynthesis; beta-alanine biosynthesis. Functionally, catalyzes a late step in pyrimidine degradation. Converts N-carbamoyl-beta-aminoisobutyrate and N-carbamoyl-beta-alanine (3-ureidopropanoate) to, respectively, beta-aminoisobutyrate and beta-alanine, ammonia and carbon dioxide. Involved in the recycling of nitrogen from nucleobases to general nitrogen metabolism. The sequence is that of Beta-ureidopropionase from Arabidopsis thaliana (Mouse-ear cress).